Reading from the N-terminus, the 692-residue chain is Elongation factor G (692 aa).

Residues 8–282 form the tr-type G domain; it reads ENTRNIGIMA…AVIDYLPSPL (275 aa). Residues 17–24, 81–85, and 135–138 each bind GTP; these read AHIDAGKT, DTPGH, and NKMD.

Belongs to the TRAFAC class translation factor GTPase superfamily. Classic translation factor GTPase family. EF-G/EF-2 subfamily.

It is found in the cytoplasm. Its function is as follows. Catalyzes the GTP-dependent ribosomal translocation step during translation elongation. During this step, the ribosome changes from the pre-translocational (PRE) to the post-translocational (POST) state as the newly formed A-site-bound peptidyl-tRNA and P-site-bound deacylated tRNA move to the P and E sites, respectively. Catalyzes the coordinated movement of the two tRNA molecules, the mRNA and conformational changes in the ribosome. The chain is Elongation factor G from Bacillus cereus (strain AH820).